The following is a 165-amino-acid chain: Large ribosomal subunit protein uL5 (165 aa).

This sequence belongs to the universal ribosomal protein uL5 family. As to quaternary structure, part of the 50S ribosomal subunit; contacts the 5S rRNA and probably tRNA. Forms a bridge to the 30S subunit in the 70S ribosome.

This is one of the proteins that bind and probably mediate the attachment of the 5S RNA into the large ribosomal subunit, where it forms part of the central protuberance. In the 70S ribosome it contacts protein S13 of the 30S subunit (bridge B1b), connecting the 2 subunits; this bridge is implicated in subunit movement. May contact the P site tRNA; the 5S rRNA and some of its associated proteins might help stabilize positioning of ribosome-bound tRNAs. The sequence is that of Large ribosomal subunit protein uL5 from Methanoregula boonei (strain DSM 21154 / JCM 14090 / 6A8).